Consider the following 239-residue polypeptide: Serine protease SplC (239 aa).

The first 36 residues, 1–36 (MNKNIVIKSMAALAILTSVTGINAAVVDETQQIANA), serve as a signal peptide directing secretion. Residues histidine 75, aspartate 113, and serine 193 each act as charge relay system in the active site.

Belongs to the peptidase S1B family.

The protein resides in the secreted. The sequence is that of Serine protease SplC (splC) from Staphylococcus aureus (strain bovine RF122 / ET3-1).